Reading from the N-terminus, the 305-residue chain is Transmembrane epididymal protein 1 (305 aa).

A helical membrane pass occupies residues 4–24 (FIGHISPGLFLVFYGLYQAII). N-linked (GlcNAc...) asparagine glycosylation is present at asparagine 32. A run of 6 helical transmembrane segments spans residues 51–71 (LWQI…LIVY), 100–120 (LTMF…RSVL), 124–144 (LVLL…LLLV), 159–179 (SLLI…LWAP), 187–207 (IETF…FILF), and 223–243 (IMLV…CMLG). A disordered region spans residues 285–305 (EQQDRDDQAPLLSKSSPCDRA).

Belongs to the TMEM45 family.

Its subcellular location is the membrane. This Rattus norvegicus (Rat) protein is Transmembrane epididymal protein 1 (Teddm1).